A 196-amino-acid polypeptide reads, in one-letter code: Corticoliberin (196 aa).

A signal peptide spans 1 to 24; it reads MRLPLLVSAGVLLVALLPCPPCRA. Positions 25 to 153 are excised as a propeptide; it reads LLSRGPVPGA…HQEAPERERR (129 aa). Disordered regions lie at residues 32-61, 85-105, and 136-158; these read PGARQAPQHPQPLDFFQPPPQSEQPQQPQA, APLSPASSLLAGGSGSRPSPE, and GARNALGGHQEAPERERRSEEPP. 2 stretches are compositionally biased toward low complexity: residues 38–47 and 85–104; these read PQHPQPLDFF and APLSPASSLLAGGSGSRPSP. A compositionally biased stretch (basic and acidic residues) spans 146–156; that stretch reads EAPERERRSEE. Ile-194 bears the Isoleucine amide mark.

This sequence belongs to the sauvagine/corticotropin-releasing factor/urotensin I family. Interacts (via C-terminus) with CRFR1 (via N-terminal extracellular domain). Produced by the hypothalamus and placenta.

It is found in the secreted. In terms of biological role, hormone regulating the release of corticotropin from pituitary gland. Induces NLRP6 in intestinal epithelial cells, hence may influence gut microbiota profile. The chain is Corticoliberin (CRH) from Homo sapiens (Human).